We begin with the raw amino-acid sequence, 202 residues long: Small ribosomal subunit protein uS4c (202 aa).

Residues 18–45 (LPGLTRKMAKRKSPPGQHGAASKKPSQY) form a disordered region. The 63-residue stretch at 90 to 152 (MRLDTTIFRL…SRSRKLIEGY (63 aa)) folds into the S4 RNA-binding domain.

This sequence belongs to the universal ribosomal protein uS4 family. Part of the 30S ribosomal subunit. Contacts protein S5. The interaction surface between S4 and S5 is involved in control of translational fidelity.

It is found in the plastid. The protein localises to the chloroplast. One of the primary rRNA binding proteins, it binds directly to 16S rRNA where it nucleates assembly of the body of the 30S subunit. Its function is as follows. With S5 and S12 plays an important role in translational accuracy. This is Small ribosomal subunit protein uS4c (rps4) from Nephroselmis olivacea (Green alga).